Here is a 517-residue protein sequence, read N- to C-terminus: UPF0522 protein B (517 aa).

The N-terminal stretch at 1–19 (MNKTIILLLISIIFEIVIS) is a signal peptide. Residues N148, N245, N333, N345, N370, N423, N432, and N495 are each glycosylated (N-linked (GlcNAc...) asparagine).

Belongs to the UPF0522 family.

The protein resides in the secreted. This is UPF0522 protein B from Dictyostelium discoideum (Social amoeba).